A 523-amino-acid chain; its full sequence is 2-isopropylmalate synthase (523 aa).

The 263-residue stretch at 5-267 folds into the Pyruvate carboxyltransferase domain; it reads VIIFDTTLRD…HTAINHQEIW (263 aa). The Mn(2+) site is built by aspartate 14, histidine 202, histidine 204, and asparagine 238. Positions 392 to 523 are regulatory domain; that stretch reads RLDYFSVQSG…QHNENNKETV (132 aa).

This sequence belongs to the alpha-IPM synthase/homocitrate synthase family. LeuA type 1 subfamily. As to quaternary structure, homodimer. Mn(2+) serves as cofactor.

It is found in the cytoplasm. The enzyme catalyses 3-methyl-2-oxobutanoate + acetyl-CoA + H2O = (2S)-2-isopropylmalate + CoA + H(+). It participates in amino-acid biosynthesis; L-leucine biosynthesis; L-leucine from 3-methyl-2-oxobutanoate: step 1/4. Functionally, catalyzes the condensation of the acetyl group of acetyl-CoA with 3-methyl-2-oxobutanoate (2-ketoisovalerate) to form 3-carboxy-3-hydroxy-4-methylpentanoate (2-isopropylmalate). This Shigella flexneri serotype 5b (strain 8401) protein is 2-isopropylmalate synthase.